The primary structure comprises 30 residues: L-amino-acid oxidase (30 aa).

It belongs to the flavin monoamine oxidase family. FIG1 subfamily. In terms of assembly, monomer. This is in contrast with most of its orthologs, that are non-covalently linked homodimers. It depends on FAD as a cofactor. N-glycosylated. Expressed by the venom gland.

The protein resides in the secreted. The catalysed reaction is an L-alpha-amino acid + O2 + H2O = a 2-oxocarboxylate + H2O2 + NH4(+). The enzyme catalyses L-leucine + O2 + H2O = 4-methyl-2-oxopentanoate + H2O2 + NH4(+). It catalyses the reaction L-phenylalanine + O2 + H2O = 3-phenylpyruvate + H2O2 + NH4(+). It carries out the reaction L-tryptophan + O2 + H2O = indole-3-pyruvate + H2O2 + NH4(+). The catalysed reaction is L-methionine + O2 + H2O = 4-methylsulfanyl-2-oxobutanoate + H2O2 + NH4(+). The enzyme catalyses L-2-aminohexanoate + O2 + H2O = 2-oxohexanoate + H2O2 + NH4(+). It catalyses the reaction L-tyrosine + O2 + H2O = 3-(4-hydroxyphenyl)pyruvate + H2O2 + NH4(+). Functionally, catalyzes an oxidative deamination of predominantly hydrophobic and aromatic L-amino acids, thus producing hydrogen peroxide that may contribute to the diverse toxic effects of this enzyme. Is highly active against L-Met, L-Leu, L-norleucine (L-2-aminohexanoate), L-Trp, L-Phe, moderately active against L-Tyr, and no active on L-Gly, L-Ala, L-Val, L-Pro, L-His, L-Lys, L-Arg, L-Asp, L-Asn, L-Gln, L-Glu, L-Ser, and L-Thr. Exhibits diverse biological activities, such as hemorrhage, hemolysis, edema, antibacterial and antiparasitic activities. In addition, this protein induces apoptosis. It also interacts with endothelial cells, and inhibits collagen- and ADP-induced platelet aggregation. L-LAAO family effects on platelets are controversial, since it either induces aggregation or inhibits agonist-induced aggregation. These different effects are probably due to different experimental conditions. The chain is L-amino-acid oxidase from Bothrops leucurus (Whitetail lancehead).